We begin with the raw amino-acid sequence, 161 residues long: Cyclic pyranopterin monophosphate synthase (161 aa).

Substrate-binding positions include 75 to 77 and 113 to 114; these read LCH and ME. Asp-128 is an active-site residue.

It belongs to the MoaC family. As to quaternary structure, homohexamer; trimer of dimers.

It carries out the reaction (8S)-3',8-cyclo-7,8-dihydroguanosine 5'-triphosphate = cyclic pyranopterin phosphate + diphosphate. It functions in the pathway cofactor biosynthesis; molybdopterin biosynthesis. In terms of biological role, catalyzes the conversion of (8S)-3',8-cyclo-7,8-dihydroguanosine 5'-triphosphate to cyclic pyranopterin monophosphate (cPMP). The sequence is that of Cyclic pyranopterin monophosphate synthase from Escherichia coli O9:H4 (strain HS).